The primary structure comprises 576 residues: G protein-coupled receptor kinase 6 (576 aa).

The segment at 1 to 185 is N-terminal; that stretch reads MELENIVANT…LERQPVTKNT (185 aa). The 119-residue stretch at 53 to 171 folds into the RGS domain; the sequence is YHSLCERQPI…LDSIYFNRFL (119 aa). Positions 186-448 constitute a Protein kinase domain; it reads FRQYRVLGKG…AREVKEHPLF (263 aa). ATP is bound by residues 192–200, Lys215, and 264–270; these read LGKGGFGEV and TLMNGGD. Asp311 functions as the Proton acceptor in the catalytic mechanism. ATP is bound at residue 315-318; sequence ENIL. The region spanning 449–514 is the AGC-kinase C-terminal domain; sequence KKLNFKRLGA…GSVSIPWQNE (66 aa). Ser484 bears the Phosphoserine; by autocatalysis mark. Position 485 is a phosphothreonine; by autocatalysis (Thr485). S-palmitoyl cysteine attachment occurs at residues Cys561, Cys562, and Cys565. Ser566 and Ser568 each carry phosphoserine.

It belongs to the protein kinase superfamily. AGC Ser/Thr protein kinase family. GPRK subfamily. In terms of assembly, interacts with GIT1. In terms of tissue distribution, widely expressed. Detectable in all brain areas examined.

The protein resides in the membrane. It catalyses the reaction [G-protein-coupled receptor] + ATP = [G-protein-coupled receptor]-phosphate + ADP + H(+). Functionally, specifically phosphorylates the activated forms of G protein-coupled receptors. Such receptor phosphorylation initiates beta-arrestin-mediated receptor desensitization, internalization, and signaling events leading to their desensitization. Seems to be involved in the desensitization of D2-like dopamine receptors in striatum and chemokine receptor CXCR4 which is critical for CXCL12-induced cell chemotaxis. Phosphorylates rhodopsin (RHO) (in vitro) and a non G-protein-coupled receptor: LRP6 during Wnt signaling (in vitro). This Rattus norvegicus (Rat) protein is G protein-coupled receptor kinase 6 (Grk6).